The sequence spans 282 residues: MMASNVTNKTDPRSMNSRVFIGNLNTLVVKKTDVEAIFSKYGKIVGCSVHKGFAFVQFSNERTARTAVAGEDGRMIAGQVLDINLAAEPKANRSKTGVKRSAADMYGSSFDLEYDFPRDYYDSYSATRVPAPPPLARAVVPSKRQRVSGNASRRGKSGFNSKSGQRGGSSKSSRLKGDDLQAIKKELSQIKQRVDSLLENLERIERDQSKQDTKLDDDQSSVSLKKEETGVKLIEETGDSAEEGDLLDDDEQGEDTLEEIKDGDKETEEGEDEGDSANEEDS.

In terms of domain architecture, RRM spans 17-88; that stretch reads SRVFIGNLNT…QVLDINLAAE (72 aa). Disordered regions lie at residues 131-177 and 208-282; these read APPP…RLKG and QSKQ…EEDS. The Nuclear localization signal motif lies at 141 to 147; that stretch reads PSKRQRV. Low complexity predominate over residues 161–172; that stretch reads SKSGQRGGSSKS. Residues 177–217 adopt a coiled-coil conformation; that stretch reads GDDLQAIKKELSQIKQRVDSLLENLERIERDQSKQDTKLDD. Composition is skewed to basic and acidic residues over residues 208–217 and 224–235; these read QSKQDTKLDD and LKKEETGVKLIE. Acidic residues-rich tracts occupy residues 236-257 and 265-282; these read ETGDSAEEGDLLDDDEQGEDTL and KETEEGEDEGDSANEEDS.

Belongs to the RRM HNRPC family. RALY subfamily. As to quaternary structure, tetramer.

The protein localises to the nucleus. Its function is as follows. Binds pre-mRNA and nucleates the assembly of 40S hnRNP particles. Interacts with poly-U tracts in the 3'-UTR or 5'-UTR of mRNA and modulates the stability and the level of translation of bound mRNA molecules. Single HNRNPC tetramers bind 230-240 nucleotides. Trimers of HNRNPC tetramers bind 700 nucleotides. May play a role in the early steps of spliceosome assembly and pre-mRNA splicing. N6-methyladenosine (m6A) has been shown to alter the local structure in mRNAs and long non-coding RNAs (lncRNAs) via a mechanism named 'm(6)A-switch', facilitating binding of HNRNPC, leading to regulation of mRNA splicing. The polypeptide is Heterogeneous nuclear ribonucleoprotein C (hnrnpc) (Xenopus laevis (African clawed frog)).